A 298-amino-acid chain; its full sequence is Keratin-associated protein 10-11 (298 aa).

Tandem repeats lie at residues 26-30 (CCEPP), 36-40 (CCAPA), 57-61 (CCQAA), 79-83 (CCQQS), 89-93 (CCTSS), 99-103 (CCVPV), 104-108 (CCKTV), 109-113 (CCKPV), 114-118 (CCVPV), 119-123 (CCGAA), 126-130 (CCRQS), 136-140 (CCASS), 146-150 (CCVPV), 151-155 (CCKPV), 156-160 (CCVST), 168-172 (CCQQS), 178-182 (CCTSS), 188-192 (CCVPV), 193-197 (CCKTV), 203-207 (CCVPV), 225-229 (CCTTS), 230-234 (CCRPS), 249-253 (CCVPV), 256-260 (CCAPT), and 267-271 (CCRPA). Residues 26-271 (CCEPPCSAPS…SCQSSCCRPA (246 aa)) are 25 X 5 AA repeats of C-C-X(3).

Belongs to the KRTAP type 10 family. As to quaternary structure, interacts with hair keratins. In terms of tissue distribution, restricted to a narrow region of the hair fiber cuticle, lying approximately 20 cell layers above the apex of the dermal papilla of the hair root; not detected in any other tissues.

Functionally, in the hair cortex, hair keratin intermediate filaments are embedded in an interfilamentous matrix, consisting of hair keratin-associated proteins (KRTAP), which are essential for the formation of a rigid and resistant hair shaft through their extensive disulfide bond cross-linking with abundant cysteine residues of hair keratins. The matrix proteins include the high-sulfur and high-glycine-tyrosine keratins. The sequence is that of Keratin-associated protein 10-11 (KRTAP10-11) from Homo sapiens (Human).